The chain runs to 354 residues: MAPQTCAICQKAKAMVKRPKTGEQICRECFFYVFETEVHNTITQANLFKPGDRVAIGASGGKDSTVLAYVMKMLNERYQYGLELFLLSIDEGITGYRDDSLETVKRNQQQYDMPLKILSYDELYGWTMDAIVSQVGRKNNCTFCGVFRRQALDRGAAMLNVDHIVTGHNADDIAETVLMNIMRGDIARLGRCTSICTQGEDTIRRSKPFKYAYEKEIVMYAYFKKLDYFSTECIYSPDAYRGHARVFLKDLEAARPSAIIDIIHSGEAFEVREEVKATQRVQQVCQRCGYMSSNALCKACTLLEGLERGMANSGITDRARKKLDAEGPAPDNLRTIPFFKPPSGGPLIAIESVS.

This sequence belongs to the TtcA family. CTU1/NCS6/ATPBD3 subfamily.

Its subcellular location is the cytoplasm. It functions in the pathway tRNA modification; 5-methoxycarbonylmethyl-2-thiouridine-tRNA biosynthesis. In terms of biological role, plays a central role in 2-thiolation of mcm(5)S(2)U at tRNA wobble positions of tRNA(Lys), tRNA(Glu) and tRNA(Gln). Directly binds tRNAs and probably acts by catalyzing adenylation of tRNAs, an intermediate required for 2-thiolation. It is unclear whether it acts as a sulfurtransferase that transfers sulfur from thiocarboxylated URM1 onto the uridine of tRNAs at wobble position. Prior mcm(5) tRNA modification by the elongator complex is required for 2-thiolation. May also be involved in protein urmylation. The chain is Cytoplasmic tRNA 2-thiolation protein 1 from Laccaria bicolor (strain S238N-H82 / ATCC MYA-4686) (Bicoloured deceiver).